Reading from the N-terminus, the 1001-residue chain is E3 ubiquitin-protein ligase BRE1B (1001 aa).

The disordered stretch occupies residues 1-40 (MSGLSNKRAAGDGGSGPPEKKMNREEKTTTTLIEPIRLGG). Positions 18–28 (PEKKMNREEKT) are enriched in basic and acidic residues. K20 carries the N6-acetyllysine modification. Position 42 is a phosphoserine (S42). A coiled-coil region spans residues 55-91 (KNKKLAERLEQRQACEDELRERIEKLEKRQATDDATL). The segment at 122–142 (TEVPGCQEGLTRDVIPRPDPG) is disordered. Coiled-coil stretches lie at residues 189 to 377 (KAAV…LRSL) and 437 to 525 (LQKK…ASGS). N6-acetyllysine occurs at positions 355 and 517. The disordered stretch occupies residues 519-647 (RAQASGSSHC…KAKVEEAKRK (129 aa)). Positions 565–576 (ALLAGATSATSS) are enriched in low complexity. Residues K578 and K579 each participate in a glycyl lysine isopeptide (Lys-Gly) (interchain with G-Cter in SUMO2) cross-link. Phosphoserine occurs at positions 584 and 585. Basic and acidic residues-rich tracts occupy residues 602–619 (RGRE…EREG) and 633–647 (RADR…AKRK). Residues 627–946 (AASTLSRADR…EEIKEYKARL (320 aa)) are a coiled coil. Residues 948 to 987 (CPCCNTRKKDAVLTKCFHVFCFECVRGRYEARQRKCPKCN) form an RING-type zinc finger.

This sequence belongs to the BRE1 family. Component of the RNF20/40 complex (also known as BRE1 complex) probably composed of 2 copies of RNF20/BRE1A and 2 copies of RNF40/BRE1B. Interacts with UBE2E1/UBCH6. Interacts with RB1 and WAC.

It localises to the nucleus. The enzyme catalyses S-ubiquitinyl-[E2 ubiquitin-conjugating enzyme]-L-cysteine + [acceptor protein]-L-lysine = [E2 ubiquitin-conjugating enzyme]-L-cysteine + N(6)-ubiquitinyl-[acceptor protein]-L-lysine.. It functions in the pathway protein modification; protein ubiquitination. Component of the RNF20/40 E3 ubiquitin-protein ligase complex that mediates monoubiquitination of 'Lys-120' of histone H2B (H2BK120ub1). H2BK120ub1 gives a specific tag for epigenetic transcriptional activation and is also prerequisite for histone H3 'Lys-4' and 'Lys-79' methylation (H3K4me and H3K79me, respectively). It thereby plays a central role in histone code and gene regulation. The RNF20/40 complex forms a H2B ubiquitin ligase complex in cooperation with the E2 enzyme UBE2A or UBE2B; reports about the cooperation with UBE2E1/UBCH are contradictory. Required for transcriptional activation of Hox genes. In Mus musculus (Mouse), this protein is E3 ubiquitin-protein ligase BRE1B (Rnf40).